Here is an 816-residue protein sequence, read N- to C-terminus: Phosphatidylinositol 4-kinase beta (816 aa).

Disordered regions lie at residues 1-29, 99-121, and 250-318; these read MGDMVVEPATLKPTSEPTPSPSGNNGGSL, EEEDEMEPGVVSGTAKGTRRRRQ, and RKRE…SFSS. Gly2 is modified (N-acetylglycine). Residues 2 to 68 form an interaction with ACBD3 region; that stretch reads GDMVVEPATL…VKLLHGGVAI (67 aa). Low complexity predominate over residues 10–29; the sequence is TLKPTSEPTPSPSGNNGGSL. Residues 61–242 form the PIK helical domain; sequence LLHGGVAISS…GTKLRKLILS (182 aa). The residue at position 258 (Ser258) is a Phosphoserine. At Thr263 the chain carries Phosphothreonine. Phosphoserine is present on residues Ser266, Ser275, Ser277, Ser284, and Ser294. 2 stretches are compositionally biased toward polar residues: residues 278–297 and 306–318; these read DATASISLSSNLKRTASNPK and SSSTESIDNSFSS. Ser428 is modified (phosphoserine). Phosphothreonine is present on Thr438. Ser511 carries the post-translational modification Phosphoserine. Residues Thr517 and Thr519 each carry the phosphothreonine modification. In terms of domain architecture, PI3K/PI4K catalytic spans 535–801; it reads EPWQEKVRRI…MVDGSMRSIT (267 aa). The interval 541-547 is G-loop; it reads VRRIREG. The tract at residues 668–676 is catalytic loop; that stretch reads QVKDRHNGN. Residues 687-711 form an activation loop region; that stretch reads HIDFGFILSSSPRNLGFETSAFKLT.

This sequence belongs to the PI3/PI4-kinase family. Type III PI4K subfamily. In terms of assembly, interacts with ARF1 and ARF3 in the Golgi complex, but not with ARF4, ARF5 or ARF6. Interacts with NCS1/FREQ in a calcium-independent manner. Interacts with CALN1/CABP8 and CALN2/CABP7; in a calcium-dependent manner; this interaction competes with NCS1/FREQ binding. Interacts with ACBD3. Interacts with ARMH3, YWHAB, YWHAE, YWHAG, YWHAH, YWHAQ, YWHAZ and SFN. Interacts with GGA2 (via VHS domain); the interaction is important for PI4KB location at the Golgi apparatus membrane. Interacts with ATG9A. Requires Mg(2+) as cofactor. It depends on Mn(2+) as a cofactor. In terms of tissue distribution, strongly expressed in brain, kidney, lung, small intestine, uterus and adrenal gland. Weaker expression in liver, heart, skeletal muscle, thymus and testis. Not detected in spleen.

The protein resides in the golgi apparatus. It localises to the endomembrane system. It is found in the mitochondrion outer membrane. Its subcellular location is the rough endoplasmic reticulum membrane. The protein localises to the golgi apparatus membrane. The enzyme catalyses a 1,2-diacyl-sn-glycero-3-phospho-(1D-myo-inositol) + ATP = a 1,2-diacyl-sn-glycero-3-phospho-(1D-myo-inositol 4-phosphate) + ADP + H(+). Its activity is regulated as follows. Inhibited by wortmannin. Increased kinase activity upon interaction with NCS1/FREQ. Phosphorylates phosphatidylinositol (PI) in the first committed step in the production of the second messenger inositol-1,4,5,-trisphosphate (PIP). May regulate Golgi disintegration/reorganization during mitosis, possibly via its phosphorylation. Involved in Golgi-to-plasma membrane trafficking. May play an important role in the inner ear development. The chain is Phosphatidylinositol 4-kinase beta (Pi4kb) from Rattus norvegicus (Rat).